Consider the following 795-residue polypeptide: uncharacterized protein (795 aa).

This is an uncharacterized protein from Methanocaldococcus jannaschii (strain ATCC 43067 / DSM 2661 / JAL-1 / JCM 10045 / NBRC 100440) (Methanococcus jannaschii).